Consider the following 267-residue polypeptide: Tetrahydromethanopterin S-methyltransferase subunit C (267 aa).

The next 7 membrane-spanning stretches (helical) occupy residues 19-39 (IMAI…FMPA), 40-60 (QFSF…ADAV), 75-95 (IGMI…SVGG), 96-116 (IAGP…IGVL), 131-151 (AMVE…VVIA), 162-182 (YVVA…GILH), and 221-241 (GLMA…WAFM).

The protein belongs to the MtrC family. The complex is composed of 8 subunits; MtrA, MtrB, MtrC, MtrD, MtrE, MtrF, MtrG and MtrH.

Its subcellular location is the cell membrane. It catalyses the reaction 5-methyl-5,6,7,8-tetrahydromethanopterin + coenzyme M + 2 Na(+)(in) = 5,6,7,8-tetrahydromethanopterin + methyl-coenzyme M + 2 Na(+)(out). Its pathway is one-carbon metabolism; methanogenesis from CO(2); methyl-coenzyme M from 5,10-methylene-5,6,7,8-tetrahydromethanopterin: step 2/2. Its function is as follows. Part of a complex that catalyzes the formation of methyl-coenzyme M and tetrahydromethanopterin from coenzyme M and methyl-tetrahydromethanopterin. This is an energy-conserving, sodium-ion translocating step. The protein is Tetrahydromethanopterin S-methyltransferase subunit C of Methanosarcina acetivorans (strain ATCC 35395 / DSM 2834 / JCM 12185 / C2A).